A 589-amino-acid chain; its full sequence is Protein MICRORCHIDIA 3 (589 aa).

Residues 1-33 (MAPESKNAGVSVVVNLDSDSDSDNDDGVGGRGA) are disordered. A coiled-coil region spans residues 542–589 (MRCEEYVKKETELEQTVSNLAKELEETKSKCARLALLVDAKRREMQQV).

This sequence belongs to the MORC ATPase protein family. As to quaternary structure, homodimer and heterodimer. Component of an RNA-directed DNA methylation (RdDM) complex. Mg(2+) is required as a cofactor. Requires Mn(2+) as cofactor.

Its subcellular location is the nucleus. In terms of biological role, exhibits ATPase activity. Binds DNA/RNA in a non-specific manner and exhibits endonuclease activity. Probably involved in DNA repair. Involved in RNA-directed DNA methylation (RdDM) as a component of the RdDM machinery and required for gene silencing. May also be involved in the regulation of chromatin architecture to maintain gene silencing. This Arabidopsis thaliana (Mouse-ear cress) protein is Protein MICRORCHIDIA 3.